The sequence spans 430 residues: Adenylosuccinate synthetase (430 aa).

Residues 12–18 (GDEGKGK) and 40–42 (GHT) contribute to the GTP site. The active-site Proton acceptor is the Asp-13. Asp-13 and Gly-40 together coordinate Mg(2+). IMP contacts are provided by residues 13–16 (DEGK), 38–41 (NAGH), Thr-128, Arg-142, Gln-223, Thr-238, and Arg-302. His-41 serves as the catalytic Proton donor. 298-304 (TTTGRPR) lines the substrate pocket. GTP is bound by residues Arg-304, 330-332 (LLD), and 412-414 (SVG).

This sequence belongs to the adenylosuccinate synthetase family. As to quaternary structure, homodimer. It depends on Mg(2+) as a cofactor.

It localises to the cytoplasm. The catalysed reaction is IMP + L-aspartate + GTP = N(6)-(1,2-dicarboxyethyl)-AMP + GDP + phosphate + 2 H(+). Its pathway is purine metabolism; AMP biosynthesis via de novo pathway; AMP from IMP: step 1/2. Its function is as follows. Plays an important role in the de novo pathway of purine nucleotide biosynthesis. Catalyzes the first committed step in the biosynthesis of AMP from IMP. This chain is Adenylosuccinate synthetase, found in Listeria welshimeri serovar 6b (strain ATCC 35897 / DSM 20650 / CCUG 15529 / CIP 8149 / NCTC 11857 / SLCC 5334 / V8).